The following is a 514-amino-acid chain: F-box-like/WD repeat-containing protein TBL1XR1 (514 aa).

Ser2 carries the post-translational modification N-acetylserine. The 33-residue stretch at 4 to 36 folds into the LisH domain; it reads SSDEVNFLVYRYLQESGFSHSAFTFGIESHISQ. Residues 41-86 enclose the F-box-like domain; sequence GALVPPAALISIIQKGLQYVEAEVSINEDGTLFDGRPIESLSLIDA. At Lys102 the chain carries N6-acetyllysine. Ser119 bears the Phosphoserine mark. The segment covering 120–135 has biased composition (low complexity); it reads QQGSAKNGENTANGEE. The interval 120–139 is disordered; it reads QQGSAKNGENTANGEENGAH. 8 WD repeats span residues 167–206, 223–262, 264–303, 306–344, 347–386, 389–437, 440–479, and 481–513; these read GHES…TSGS, PSNK…ASTL, QHKG…AKQQ, FHSA…PIKT, GHTN…CVHD, AHNK…CIHT, KHQE…LVHS, and RGTG…LDLR. Lys277 is covalently cross-linked (Glycyl lysine isopeptide (Lys-Gly) (interchain with G-Cter in SUMO2)).

This sequence belongs to the WD repeat EBI family. Component of the N-Cor repressor complex, at least composed of NCOR1, NCOR2, HDAC3, TBL1X, TBL1XR1, CORO2A and GPS2. Probable component of some E3 ubiquitin ligase complex. Interacts with histones H2B and H4. Interacts with MECP2; bridges interaction between MECP2 and NCOR1. Interacts with USP44. In terms of tissue distribution, widely expressed including the pituitary, hypothalamus, white and brown adipose tissue, muscle and liver.

The protein resides in the nucleus. In terms of biological role, F-box-like protein involved in the recruitment of the ubiquitin/19S proteasome complex to nuclear receptor-regulated transcription units. Plays an essential role in transcription activation mediated by nuclear receptors. Probably acts as integral component of the N-Cor corepressor complex that mediates the recruitment of the 19S proteasome complex, leading to the subsequent proteasomal degradation of N-Cor complex, thereby allowing cofactor exchange, and transcription activation. In Homo sapiens (Human), this protein is F-box-like/WD repeat-containing protein TBL1XR1 (TBL1XR1).